The following is a 614-amino-acid chain: Polyamine transporter 2 (614 aa).

Residues 1–40 (MSDQESVVSFNSQNTSMVDVEGQQPQQYVPSKTNSRANQL) are disordered. Residues 1–173 (MSDQESVVSF…WPSWVRWSYT (173 aa)) are Cytoplasmic-facing. Residue Ser50 is modified to Phosphoserine. A compositionally biased stretch (polar residues) spans 99–122 (RTASALSRTRTKQLNRTATNSSST). A disordered region spans residues 99 to 144 (RTASALSRTRTKQLNRTATNSSSTGKEEMEEEETEEREDQSGENEL). Positions 126 to 144 (EMEEEETEEREDQSGENEL) are enriched in acidic residues. Residues 174–194 (VLLSILVICVAYGSACISGGL) traverse the membrane as a helical segment. At 195–206 (GTVEKKYHVGME) the chain is on the extracellular side. A helical membrane pass occupies residues 207–227 (AAILSCSLMVIGFSLGPLIWS). The Cytoplasmic segment spans residues 228–236 (PVSDLYGRR). Residues 237-257 (VAYFVSMGLYVIFNIPCALAP) form a helical membrane-spanning segment. At 258-266 (NLGCLLACR) the chain is on the extracellular side. A helical transmembrane segment spans residues 267–287 (FLCGVWSSSGLCLVGGSIADM). Topologically, residues 288–297 (FPSETRGKAI) are cytoplasmic. Residues 298–318 (AFFAFAPYVGPVVGPLVNGFI) traverse the membrane as a helical segment. The Extracellular portion of the chain corresponds to 319–326 (SVSTGRMD). The helical transmembrane segment at 327–347 (LIFWVNMAFAGVMWIISSAIP) threads the bilayer. Residues 348–407 (ETYAPVILKRKAARLRKETGNPKIMTEQEAQGVSMSEMMRACLLRPLYFAVTEPVLVATC) lie on the Cytoplasmic side of the membrane. Residues 408-428 (FYVCLIYSLLYAFFFAFPVIF) traverse the membrane as a helical segment. Residues 429–437 (GELYGYKDN) are Extracellular-facing. A helical transmembrane segment spans residues 438 to 458 (LVGLMFIPIVIGALWALATTF). Over 459-478 (YCENKYLQIVKQRKPTPEDR) the chain is Cytoplasmic. Residues 479 to 499 (LLGAKIGAPFAAIALWILGAT) traverse the membrane as a helical segment. Topologically, residues 500–503 (AYKH) are extracellular. Residues 504 to 524 (IIWVGPASAGLAFGFGMVLIY) form a helical membrane-spanning segment. Over 525–541 (YSLNNYIIDCYVQYASS) the chain is Cytoplasmic. Residues 542 to 562 (ALATKVFLRSAGGAAFPLFTI) form a helical membrane-spanning segment. Residues 563 to 574 (QMYHKLNLHWGS) lie on the Extracellular side of the membrane. A helical membrane pass occupies residues 575-595 (WLLAFISTAMIALPFAFSYWG). At 596-614 (KGLRHKLSKKDYSIDSVEM) the chain is on the cytoplasmic side.

This sequence belongs to the major facilitator superfamily. DHA1 family. Polyamines/proton antiporter (TC 2.A.1.2.16) subfamily.

The protein resides in the cell membrane. In terms of biological role, cell membrane polyamine/proton antiporter, involved in the detoxification of excess polyamines in the cytoplasm. Recognizes spermine, but not spermidine. This is Polyamine transporter 2 (TPO2) from Saccharomyces cerevisiae (strain ATCC 204508 / S288c) (Baker's yeast).